We begin with the raw amino-acid sequence, 335 residues long: Anthranilate phosphoribosyltransferase (335 aa).

Residues glycine 82, 85 to 86 (GD), threonine 90, 92 to 95 (NIST), 110 to 118 (KHGGRSVSS), and serine 122 contribute to the 5-phospho-alpha-D-ribose 1-diphosphate site. Glycine 82 is an anthranilate binding site. Serine 94 lines the Mg(2+) pocket. Residue arginine 168 participates in anthranilate binding. The Mg(2+) site is built by aspartate 226 and glutamate 227.

Belongs to the anthranilate phosphoribosyltransferase family. As to quaternary structure, homodimer. Mg(2+) is required as a cofactor.

It carries out the reaction N-(5-phospho-beta-D-ribosyl)anthranilate + diphosphate = 5-phospho-alpha-D-ribose 1-diphosphate + anthranilate. It functions in the pathway amino-acid biosynthesis; L-tryptophan biosynthesis; L-tryptophan from chorismate: step 2/5. Functionally, catalyzes the transfer of the phosphoribosyl group of 5-phosphorylribose-1-pyrophosphate (PRPP) to anthranilate to yield N-(5'-phosphoribosyl)-anthranilate (PRA). This chain is Anthranilate phosphoribosyltransferase, found in Francisella philomiragia subsp. philomiragia (strain ATCC 25017 / CCUG 19701 / FSC 153 / O#319-036).